Reading from the N-terminus, the 127-residue chain is Aspartate 1-decarboxylase (127 aa).

Ser-25 (schiff-base intermediate with substrate; via pyruvic acid) is an active-site residue. Pyruvic acid (Ser) is present on Ser-25. Thr-57 is a binding site for substrate. The active-site Proton donor is Tyr-58. Position 73 to 75 (73 to 75 (GAA)) interacts with substrate.

It belongs to the PanD family. As to quaternary structure, heterooctamer of four alpha and four beta subunits. Pyruvate is required as a cofactor. In terms of processing, is synthesized initially as an inactive proenzyme, which is activated by self-cleavage at a specific serine bond to produce a beta-subunit with a hydroxyl group at its C-terminus and an alpha-subunit with a pyruvoyl group at its N-terminus.

It is found in the cytoplasm. The enzyme catalyses L-aspartate + H(+) = beta-alanine + CO2. Its pathway is cofactor biosynthesis; (R)-pantothenate biosynthesis; beta-alanine from L-aspartate: step 1/1. Catalyzes the pyruvoyl-dependent decarboxylation of aspartate to produce beta-alanine. This Staphylococcus aureus (strain MSSA476) protein is Aspartate 1-decarboxylase.